Consider the following 313-residue polypeptide: N-acetyl-gamma-glutamyl-phosphate reductase (313 aa).

The active site involves Cys117.

It belongs to the NAGSA dehydrogenase family. Type 2 subfamily.

It localises to the cytoplasm. It catalyses the reaction N-acetyl-L-glutamate 5-semialdehyde + phosphate + NADP(+) = N-acetyl-L-glutamyl 5-phosphate + NADPH + H(+). It functions in the pathway amino-acid biosynthesis; L-arginine biosynthesis; N(2)-acetyl-L-ornithine from L-glutamate: step 3/4. Functionally, catalyzes the NADPH-dependent reduction of N-acetyl-5-glutamyl phosphate to yield N-acetyl-L-glutamate 5-semialdehyde. This chain is N-acetyl-gamma-glutamyl-phosphate reductase, found in Burkholderia cenocepacia (strain ATCC BAA-245 / DSM 16553 / LMG 16656 / NCTC 13227 / J2315 / CF5610) (Burkholderia cepacia (strain J2315)).